The following is a 477-amino-acid chain: Methylenetetrahydrofolate--tRNA-(uracil-5-)-methyltransferase TrmFO (477 aa).

An FAD-binding site is contributed by 14–19; that stretch reads GGGLAG.

It belongs to the MnmG family. TrmFO subfamily. FAD serves as cofactor.

The protein resides in the cytoplasm. The enzyme catalyses uridine(54) in tRNA + (6R)-5,10-methylene-5,6,7,8-tetrahydrofolate + NADH + H(+) = 5-methyluridine(54) in tRNA + (6S)-5,6,7,8-tetrahydrofolate + NAD(+). It carries out the reaction uridine(54) in tRNA + (6R)-5,10-methylene-5,6,7,8-tetrahydrofolate + NADPH + H(+) = 5-methyluridine(54) in tRNA + (6S)-5,6,7,8-tetrahydrofolate + NADP(+). Catalyzes the folate-dependent formation of 5-methyl-uridine at position 54 (M-5-U54) in all tRNAs. In Rhizobium etli (strain ATCC 51251 / DSM 11541 / JCM 21823 / NBRC 15573 / CFN 42), this protein is Methylenetetrahydrofolate--tRNA-(uracil-5-)-methyltransferase TrmFO.